A 130-amino-acid polypeptide reads, in one-letter code: Small ribosomal subunit protein uS8 (130 aa).

Belongs to the universal ribosomal protein uS8 family. In terms of assembly, part of the 30S ribosomal subunit.

In terms of biological role, one of the primary rRNA binding proteins, it binds directly to 16S rRNA central domain where it helps coordinate assembly of the platform of the 30S subunit. The chain is Small ribosomal subunit protein uS8 from Methanocorpusculum labreanum (strain ATCC 43576 / DSM 4855 / Z).